Consider the following 692-residue polypeptide: UvrABC system protein B (692 aa).

The 387-residue stretch at D32–I418 folds into the Helicase ATP-binding domain. Position 45–52 (G45–T52) interacts with ATP. The Beta-hairpin motif lies at Y98–V121. One can recognise a Helicase C-terminal domain in the interval Q436–I631. Residues K656–M691 enclose the UVR domain.

Belongs to the UvrB family. In terms of assembly, forms a heterotetramer with UvrA during the search for lesions. Interacts with UvrC in an incision complex.

The protein localises to the cytoplasm. In terms of biological role, the UvrABC repair system catalyzes the recognition and processing of DNA lesions. A damage recognition complex composed of 2 UvrA and 2 UvrB subunits scans DNA for abnormalities. Upon binding of the UvrA(2)B(2) complex to a putative damaged site, the DNA wraps around one UvrB monomer. DNA wrap is dependent on ATP binding by UvrB and probably causes local melting of the DNA helix, facilitating insertion of UvrB beta-hairpin between the DNA strands. Then UvrB probes one DNA strand for the presence of a lesion. If a lesion is found the UvrA subunits dissociate and the UvrB-DNA preincision complex is formed. This complex is subsequently bound by UvrC and the second UvrB is released. If no lesion is found, the DNA wraps around the other UvrB subunit that will check the other stand for damage. In Lactococcus lactis subsp. lactis (strain IL1403) (Streptococcus lactis), this protein is UvrABC system protein B.